Consider the following 415-residue polypeptide: MASAEIIAVGTELLLGQIVNSNAAFISEELAANGIYVYHHTVVGDNPKRLKDVIDIAEKRSDILIFTGGLGPTEDDITKQILAEHLQKNLVEDAFHMNEITEYFASRNRTMTENNKLQAVIIEGSTVLNNDYGFAAGMFLKENNHTYILLPGPPSEMKPMFSSYAEPLLVSENTEKNVLESKIMRFFGIGESQLAADLNDMILAQVNPTIATYAGDNEVVVRITATAKTKEEASALVNETEQEILRRDGTFLYGYGEVSLPELVTAMLLEKNITISAAESFTAGLFQAEIARFPGISKIFKGGMVTYSEETKQSILEVSPQTIKENGVVSSECAKEMAKNVSRLCNTDIGISFTGVAGPDSLEGHPAGTIWIGLHVAGFETEAYQFVYGRDRNHNRRRAVKQGFQLIKQFLDTNK.

This sequence belongs to the CinA family.

In Listeria innocua serovar 6a (strain ATCC BAA-680 / CLIP 11262), this protein is Putative competence-damage inducible protein.